Here is a 325-residue protein sequence, read N- to C-terminus: MVPREAPESAQCLCPSLTIPNAKDVLRKRHKRRSRQHQRFMARKALLQEQGLLSMPPEPGSSPLPTPFGAVTATEDASSGKQCPRAGSGGAPCSRRPAPGKASGPLPSKCVAIDCEMVGTGPRGRVSELARCSIVSYHGDVLYDKYIRPEMPIVDYRTRWSGITRQHMCKAIPFQVAQKEILKLLKGKVVVGHALHNDFQALKYVHPRSQTRDTTYVPNFLSEPSLHIRARVSLKDLALQLLHKKIQVGQHGHSSVEDATTAMELYRLVEVQWEQQEARSLWTCPEDREPDSSTDMEQYMEDQYWPDDLAHGSRGGAREAQDRRN.

Positions 27–35 (RKRHKRRSR) match the Nucleolar localization signal motif. Residues 53-105 (LSMPPEPGSSPLPTPFGAVTATEDASSGKQCPRAGSGGAPCSRRPAPGKASGP) are disordered. Residues 56–66 (PPEPGSSPLPT) show a composition bias toward pro residues. An Exonuclease domain is found at 110 to 266 (CVAIDCEMVG…EDATTAMELY (157 aa)). A Nuclear localization signal motif is present at residues 165–188 (RQHMCKAIPFQVAQKEILKLLKGK). The interval 281 to 325 (LWTCPEDREPDSSTDMEQYMEDQYWPDDLAHGSRGGAREAQDRRN) is disordered. The span at 308 to 325 (DLAHGSRGGAREAQDRRN) shows a compositional bias: basic and acidic residues.

Its subcellular location is the nucleus. It is found in the nucleolus. Functionally, exonuclease with activity against single- and double-stranded DNA and RNA. Mediates p53-induced apoptosis. When induced by p53 following DNA damage, digests double-stranded DNA to form single-stranded DNA and amplifies DNA damage signals, leading to enhancement of apoptosis. This is Apoptosis-enhancing nuclease (AEN) from Pongo abelii (Sumatran orangutan).